A 3079-amino-acid chain; its full sequence is Inhibitory regulator protein IRA2 (3079 aa).

A disordered region spans residues 392-554; the sequence is NQNAHQGSSS…RASYDAHKTG (163 aa). Low complexity predominate over residues 399–416; it reads SSSPSSSSPSSPPSSSSS. Residues 417–442 are compositionally biased toward polar residues; the sequence is DNNNQNIIAKSLSRQLSHHQSYIQQQ. Positions 449–477 are enriched in low complexity; that stretch reads SSWTTNSQSSTSLSSSTSNSTTTDFSTHT. Residues 488-497 show a composition bias toward polar residues; the sequence is DTPTMSNITI. Residues 498 to 528 show a composition bias toward low complexity; it reads SASSLLSQTPTPTTQLQQRLNSAAAAAAAAA. Residues 529–546 show a composition bias toward polar residues; sequence SPSNSTPTGYTAEQQSRA. Thr635 carries the phosphothreonine modification. Disordered stretches follow at residues 867–898, 912–935, and 952–980; these read FKGS…PLGL, GSST…LSSD, and GPSS…VQRP. 2 stretches are compositionally biased toward low complexity: residues 873 to 894 and 921 to 934; these read SLCS…TPVS and NVNS…NLSS. Positions 961–980 are enriched in polar residues; it reads IPTTLTSPPGTEKSSPVQRP. The Ras-GAP domain occupies 1717 to 1922; that stretch reads NATHIVVAQL…DRIFRFLAEL (206 aa).

The protein resides in the cytoplasm. Inhibitory regulator of the Ras-cyclic AMP pathway. Stimulates the GTPase activity of Ras proteins. The sequence is that of Inhibitory regulator protein IRA2 (IRA2) from Saccharomyces cerevisiae (strain ATCC 204508 / S288c) (Baker's yeast).